The chain runs to 498 residues: ATP synthase subunit beta, chloroplastic (498 aa).

Position 172-179 (172-179 (GGAGVGKT)) interacts with ATP.

It belongs to the ATPase alpha/beta chains family. As to quaternary structure, F-type ATPases have 2 components, CF(1) - the catalytic core - and CF(0) - the membrane proton channel. CF(1) has five subunits: alpha(3), beta(3), gamma(1), delta(1), epsilon(1). CF(0) has four main subunits: a(1), b(1), b'(1) and c(9-12).

It localises to the plastid. The protein resides in the chloroplast thylakoid membrane. The catalysed reaction is ATP + H2O + 4 H(+)(in) = ADP + phosphate + 5 H(+)(out). Functionally, produces ATP from ADP in the presence of a proton gradient across the membrane. The catalytic sites are hosted primarily by the beta subunits. The protein is ATP synthase subunit beta, chloroplastic of Hyphaene coriacea (Ilala palm).